We begin with the raw amino-acid sequence, 243 residues long: Zinc import ATP-binding protein ZnuC (243 aa).

Positions 4–219 (IAAHHLAVRR…PEYRALFGHG (216 aa)) constitute an ABC transporter domain. 36 to 43 (GPNGSGKS) provides a ligand contact to ATP.

The protein belongs to the ABC transporter superfamily. Zinc importer (TC 3.A.1.15.5) family. In terms of assembly, the complex is composed of two ATP-binding proteins (ZnuC), two transmembrane proteins (ZnuB) and a solute-binding protein (ZnuA).

The protein localises to the cell inner membrane. The catalysed reaction is Zn(2+)(out) + ATP(in) + H2O(in) = Zn(2+)(in) + ADP(in) + phosphate(in) + H(+)(in). Part of the ABC transporter complex ZnuABC involved in zinc import. Responsible for energy coupling to the transport system. This chain is Zinc import ATP-binding protein ZnuC, found in Cereibacter sphaeroides (strain ATCC 17023 / DSM 158 / JCM 6121 / CCUG 31486 / LMG 2827 / NBRC 12203 / NCIMB 8253 / ATH 2.4.1.) (Rhodobacter sphaeroides).